A 1300-amino-acid chain; its full sequence is Zinc finger protein 536 (1300 aa).

2 disordered regions span residues 1 to 26 (MEEASLCLGVSSAEPEAEPHLSGPVL) and 47 to 77 (FPELHPRPNPEEKPPASLEEKAHVPMSGQPM). The segment covering 48 to 69 (PELHPRPNPEEKPPASLEEKAH) has biased composition (basic and acidic residues). 6 consecutive C2H2-type zinc fingers follow at residues 130 to 152 (YPCPLCGKRFRFNSILSLHMRTH), 158 to 180 (FKCPYCDHRAAQKGNLKIHLRTH), 274 to 297 (FRCTFCKGKFKKREELDRHIRILH), 300 to 323 (YKCTLCDFAASQEEELISHVEKAH), 345 to 367 (FRCEVCGQVFSQAWFLKGHMRKH), and 373 to 395 (HCCQICGRRFKEPWFLKNHMKVH). Disordered stretches follow at residues 584–604 (HSTKVGSQRDLPSKLDPLESS) and 650–739 (SRVH…QQPA). Basic and acidic residues predominate over residues 594 to 604 (LPSKLDPLESS). The C2H2-type 7 zinc finger occupies 631–653 (TECPDCGRVFRTYHQVVVHSRVH). The segment covering 657–674 (RKGEEDGLHVGLDERRGS) has biased composition (basic and acidic residues). The segment covering 675–696 (GSDQESQSVSRSTTPGSSNVTE) has biased composition (polar residues). 2 C2H2-type zinc fingers span residues 751–773 (KDCPYCGKTFRTSHHLKVHLRIH) and 779–801 (YKCPHCDYAGTQSASLKYHLERH). Residues 802-826 (HRERQNGAGPLSGQPPNQDHKDEMS) form a disordered region. Residues S826 and S827 each carry the phosphoserine modification. The segment covering 856-880 (SQQWTSGVLSSGDHSGQATGMSSEV) has biased composition (polar residues). Disordered stretches follow at residues 856 to 893 (SQQWTSGVLSSGDHSGQATGMSSEVPSDALKGTDLPSK), 937 to 985 (KDKA…PDAA), and 1124 to 1260 (SGAS…SLDK). Basic and acidic residues-rich tracts occupy residues 950–972 (HGVDGGEEKPSGKSSQRKSEKSQ) and 1133–1143 (KEPDGKAHSEE). Composition is skewed to acidic residues over residues 1160–1170 (DLSDIASSEDM) and 1178–1187 (NDEEDVETEP). Low complexity predominate over residues 1194–1209 (LSALSKDSSSDGGDSL).

The protein belongs to the krueppel C2H2-type zinc-finger protein family.

It is found in the nucleus. Functionally, transcriptional repressor that negatively regulates neuron differentiation by repressing retinoic acid-induced gene transcription. Binds and interrupts RARA from binding to retinoic acid response elements (RARE) composed of tandem 5'-AGGTCA-3' sites known as DR1-DR5. Recognizes and binds 2 copies of the core DNA sequence 5'-CCCCCA-3'. This chain is Zinc finger protein 536 (ZNF536), found in Homo sapiens (Human).